The following is a 158-amino-acid chain: SsrA-binding protein (158 aa).

The segment covering 136–151 has biased composition (basic and acidic residues); it reads KRADSKSRDWARDKQR. Residues 136–158 are disordered; that stretch reads KRADSKSRDWARDKQRIMKHSTR.

It belongs to the SmpB family.

It localises to the cytoplasm. Functionally, required for rescue of stalled ribosomes mediated by trans-translation. Binds to transfer-messenger RNA (tmRNA), required for stable association of tmRNA with ribosomes. tmRNA and SmpB together mimic tRNA shape, replacing the anticodon stem-loop with SmpB. tmRNA is encoded by the ssrA gene; the 2 termini fold to resemble tRNA(Ala) and it encodes a 'tag peptide', a short internal open reading frame. During trans-translation Ala-aminoacylated tmRNA acts like a tRNA, entering the A-site of stalled ribosomes, displacing the stalled mRNA. The ribosome then switches to translate the ORF on the tmRNA; the nascent peptide is terminated with the 'tag peptide' encoded by the tmRNA and targeted for degradation. The ribosome is freed to recommence translation, which seems to be the essential function of trans-translation. This is SsrA-binding protein from Photobacterium profundum (strain SS9).